We begin with the raw amino-acid sequence, 249 residues long: Uridylate kinase (249 aa).

Residue Lys15–Gly18 coordinates ATP. The interval Gly23 to Gly28 is involved in allosteric activation by GTP. UMP is bound at residue Gly57. Residues Gly58 and Arg62 each coordinate ATP. Residues Asp77 and Thr138–Thr145 contribute to the UMP site. ATP is bound by residues Thr165, Phe171, and Asp174.

This sequence belongs to the UMP kinase family. In terms of assembly, homohexamer.

The protein localises to the cytoplasm. It catalyses the reaction UMP + ATP = UDP + ADP. It participates in pyrimidine metabolism; CTP biosynthesis via de novo pathway; UDP from UMP (UMPK route): step 1/1. Its activity is regulated as follows. Allosterically activated by GTP. Inhibited by UTP. Catalyzes the reversible phosphorylation of UMP to UDP. The sequence is that of Uridylate kinase from Psychromonas ingrahamii (strain DSM 17664 / CCUG 51855 / 37).